A 344-amino-acid chain; its full sequence is Leucine-rich repeat-containing protein 75A (344 aa).

The segment at 1-25 (MGTRQTKGSLAERASPGAAPGPRRE) is disordered. A compositionally biased stretch (low complexity) spans 11–21 (AERASPGAAPG). LRR repeat units follow at residues 204–217 (VDSV…LTDD) and 229–242 (LPRL…GNRL). Residues 295–344 (LPTILELGEGPGSGEEVREGTVGQEDPGGGPVAPAEDHHEGKETVAAAQT) form a disordered region.

It belongs to the LRRC75 family.

In Homo sapiens (Human), this protein is Leucine-rich repeat-containing protein 75A (LRRC75A).